The following is a 269-amino-acid chain: 4-hydroxy-tetrahydrodipicolinate reductase (269 aa).

Residues 13 to 18 (GASGRM) and Asp-39 each bind NAD(+). An NADP(+)-binding site is contributed by Arg-40. NAD(+) contacts are provided by residues 101-103 (GTT) and 125-128 (APNM). Residue His-158 is the Proton donor/acceptor of the active site. A (S)-2,3,4,5-tetrahydrodipicolinate-binding site is contributed by His-159. Lys-162 serves as the catalytic Proton donor. 168 to 169 (GT) is a (S)-2,3,4,5-tetrahydrodipicolinate binding site.

It belongs to the DapB family.

It localises to the cytoplasm. The enzyme catalyses (S)-2,3,4,5-tetrahydrodipicolinate + NAD(+) + H2O = (2S,4S)-4-hydroxy-2,3,4,5-tetrahydrodipicolinate + NADH + H(+). It carries out the reaction (S)-2,3,4,5-tetrahydrodipicolinate + NADP(+) + H2O = (2S,4S)-4-hydroxy-2,3,4,5-tetrahydrodipicolinate + NADPH + H(+). It participates in amino-acid biosynthesis; L-lysine biosynthesis via DAP pathway; (S)-tetrahydrodipicolinate from L-aspartate: step 4/4. Its function is as follows. Catalyzes the conversion of 4-hydroxy-tetrahydrodipicolinate (HTPA) to tetrahydrodipicolinate. This chain is 4-hydroxy-tetrahydrodipicolinate reductase, found in Bordetella pertussis (strain Tohama I / ATCC BAA-589 / NCTC 13251).